We begin with the raw amino-acid sequence, 248 residues long: Ubiquinone biosynthesis O-methyltransferase (248 aa).

S-adenosyl-L-methionine-binding residues include Arg-41, Gly-72, Asp-93, and Met-136.

The protein belongs to the methyltransferase superfamily. UbiG/COQ3 family.

It carries out the reaction a 3-demethylubiquinol + S-adenosyl-L-methionine = a ubiquinol + S-adenosyl-L-homocysteine + H(+). The catalysed reaction is a 3-(all-trans-polyprenyl)benzene-1,2-diol + S-adenosyl-L-methionine = a 2-methoxy-6-(all-trans-polyprenyl)phenol + S-adenosyl-L-homocysteine + H(+). It participates in cofactor biosynthesis; ubiquinone biosynthesis. In terms of biological role, O-methyltransferase that catalyzes the 2 O-methylation steps in the ubiquinone biosynthetic pathway. This is Ubiquinone biosynthesis O-methyltransferase from Rhizobium johnstonii (strain DSM 114642 / LMG 32736 / 3841) (Rhizobium leguminosarum bv. viciae).